Here is an 85-residue protein sequence, read N- to C-terminus: Large ribosomal subunit protein bL27 (85 aa).

The tract at residues 1–20 (MAHKKGGGTTRNGRDSESKR) is disordered.

The protein belongs to the bacterial ribosomal protein bL27 family.

This Herminiimonas arsenicoxydans protein is Large ribosomal subunit protein bL27.